Consider the following 232-residue polypeptide: Phosphatidylserine decarboxylase proenzyme (232 aa).

Ser-190 serves as the catalytic Schiff-base intermediate with substrate; via pyruvic acid. Ser-190 bears the Pyruvic acid (Ser); by autocatalysis mark.

Belongs to the phosphatidylserine decarboxylase family. PSD-A subfamily. Heterodimer of a large membrane-associated beta subunit and a small pyruvoyl-containing alpha subunit. It depends on pyruvate as a cofactor. In terms of processing, is synthesized initially as an inactive proenzyme. Formation of the active enzyme involves a self-maturation process in which the active site pyruvoyl group is generated from an internal serine residue via an autocatalytic post-translational modification. Two non-identical subunits are generated from the proenzyme in this reaction, and the pyruvate is formed at the N-terminus of the alpha chain, which is derived from the carboxyl end of the proenzyme. The post-translation cleavage follows an unusual pathway, termed non-hydrolytic serinolysis, in which the side chain hydroxyl group of the serine supplies its oxygen atom to form the C-terminus of the beta chain, while the remainder of the serine residue undergoes an oxidative deamination to produce ammonia and the pyruvoyl prosthetic group on the alpha chain.

It localises to the cell membrane. It carries out the reaction a 1,2-diacyl-sn-glycero-3-phospho-L-serine + H(+) = a 1,2-diacyl-sn-glycero-3-phosphoethanolamine + CO2. It participates in phospholipid metabolism; phosphatidylethanolamine biosynthesis; phosphatidylethanolamine from CDP-diacylglycerol: step 2/2. Functionally, catalyzes the formation of phosphatidylethanolamine (PtdEtn) from phosphatidylserine (PtdSer). The polypeptide is Phosphatidylserine decarboxylase proenzyme (Rhizobium johnstonii (strain DSM 114642 / LMG 32736 / 3841) (Rhizobium leguminosarum bv. viciae)).